Here is a 313-residue protein sequence, read N- to C-terminus: uncharacterized protein (313 aa).

The HTH deoR-type domain occupies 2–57 (KLERLLAMVVLLISKKQVQAAELAELFEVSVRTIYRDIETINRAGIPIVTSQGSGG). Positions 19 to 38 (VQAAELAELFEVSVRTIYRD) form a DNA-binding region, H-T-H motif. The region spanning 131 to 210 (HTEDQKTLRE…KDLAILHQTF (80 aa)) is the WYL domain.

It is found in the cytoplasm. This is an uncharacterized protein from Bacillus subtilis (strain 168).